Consider the following 324-residue polypeptide: Beta-ketoacyl-[acyl-carrier-protein] synthase III (324 aa).

Residues Cys112 and His249 contribute to the active site. The ACP-binding stretch occupies residues Gln250 to Arg254. The active site involves Asn279.

Belongs to the thiolase-like superfamily. FabH family. In terms of assembly, homodimer.

The protein localises to the cytoplasm. The catalysed reaction is malonyl-[ACP] + acetyl-CoA + H(+) = 3-oxobutanoyl-[ACP] + CO2 + CoA. Its pathway is lipid metabolism; fatty acid biosynthesis. Functionally, catalyzes the condensation reaction of fatty acid synthesis by the addition to an acyl acceptor of two carbons from malonyl-ACP. Catalyzes the first condensation reaction which initiates fatty acid synthesis and may therefore play a role in governing the total rate of fatty acid production. Possesses both acetoacetyl-ACP synthase and acetyl transacylase activities. Its substrate specificity determines the biosynthesis of branched-chain and/or straight-chain of fatty acids. This is Beta-ketoacyl-[acyl-carrier-protein] synthase III from Streptococcus pyogenes serotype M1.